The chain runs to 539 residues: Probable quinate permease (539 aa).

Topologically, residues 1 to 22 are cytoplasmic; it reads MSILSMVEDRPTPKEVYNWRIY. A helical transmembrane segment spans residues 23–43; sequence LLAAVASFTSCMIGYDSAFIG. Over 44–74 the chain is Extracellular; that stretch reads TTISLDSFKNEFHWDSMSTAKQNLVSANIVS. The chain crosses the membrane as a helical span at residues 75–95; sequence CYQAGAFFGAFFAYPIGHFWG. The Cytoplasmic segment spans residues 96–97; it reads RK. Residues 98 to 118 traverse the membrane as a helical segment; the sequence is WGLMLSALVFTLGAGLMLGAN. Topologically, residues 119-130 are extracellular; it reads GDRGLGLIYGGR. The helical transmembrane segment at 131-151 threads the bilayer; the sequence is VLAGLGVGAGSNFTPIYISEL. The Cytoplasmic portion of the chain corresponds to 152–159; it reads APPAIRGR. The helical transmembrane segment at 160-180 threads the bilayer; sequence LVGVYELGWQVGGLVGFWINY. The Extracellular portion of the chain corresponds to 181–193; that stretch reads GVEQTMAPSHKQW. A helical membrane pass occupies residues 194–214; that stretch reads LIPFAVQLIPAGLLIIGILFV. At 215–285 the chain is on the cytoplasmic side; that stretch reads KESPRWLFLR…AWTNKRILYR (71 aa). Residues 286–306 traverse the membrane as a helical segment; sequence LFLGSMLFFWQNGSGINAINY. Residues 307-325 lie on the Extracellular side of the membrane; that stretch reads YSPTVFKSIGLKGNSSSLL. A helical membrane pass occupies residues 326–346; it reads TTGIFGVVKTVVTIVWLLYLI. At 347 to 352 the chain is on the cytoplasmic side; it reads DHVGRR. Residues 353–373 traverse the membrane as a helical segment; it reads LLLLIGAAGGSICMWIVGAYI. Over 374-387 the chain is Extracellular; sequence KVVDPTHNQSDHLN. Residues 388–408 form a helical membrane-spanning segment; it reads GGGVAAIFFFYLWTAFYTPSW. Over 409–456 the chain is Cytoplasmic; that stretch reads NGTPWVINSEMFDPNIRSLAQACAAGSNWLWNFLISRFTPQMFAKMDY. A helical membrane pass occupies residues 457 to 477; that stretch reads GVYFFFASLMLLSIPFVFFLV. Over 478–539 the chain is Extracellular; the sequence is PETKGIPLEN…EQVEDTDRKE (62 aa).

This sequence belongs to the major facilitator superfamily. Sugar transporter (TC 2.A.1.1) family. As to quaternary structure, interacts with creB. Post-translationally, ubiquitinated. Deubiquitinated by creB, probably to control its activity or amount.

It localises to the cell membrane. Functionally, integral membrane transporter that imports quinic acid to be catabolized as a carbon source. This is Probable quinate permease (qutD) from Aspergillus niger (strain ATCC MYA-4892 / CBS 513.88 / FGSC A1513).